The primary structure comprises 616 residues: Protein RIK (616 aa).

The span at 1 to 11 (MTEDRAHKVAD) shows a compositional bias: basic and acidic residues. Residues 1–32 (MTEDRAHKVADEPAASGRQSPERKKRKWDQPA) form a disordered region. A KH domain is found at 198 to 304 (GTTSESISVP…AKVLAENLLD (107 aa)). Polar residues-rich tracts occupy residues 432–449 (TQAV…TKGN), 475–484 (TESQNSQQGS), and 491–502 (LDSSGNIGSSSI). 2 disordered regions span residues 432–455 (TQAV…LDAE) and 467–616 (LPVS…HTCV). A compositionally biased stretch (pro residues) spans 534 to 564 (LPPPLKSMLPLPPRSMPPPPPKSMPPPPPKF). Composition is skewed to basic and acidic residues over residues 565–575 (PSDEFLSRNEN) and 598–610 (SERR…EEKN).

Interacts with RS2. In terms of tissue distribution, expressed in vegetative tissues. More abundant in apices and young leaf primordia than in fully expanded leaf tissues.

The protein resides in the nucleus. In Zea mays (Maize), this protein is Protein RIK.